Here is a 332-residue protein sequence, read N- to C-terminus: 2,3-diketo-L-gulonate reductase (332 aa).

Catalysis depends on His-44, which acts as the Proton donor. NAD(+) is bound by residues Ile-168–Ser-174, Trp-224–Lys-225, and Gly-304–Glu-306.

Belongs to the LDH2/MDH2 oxidoreductase family. DlgD subfamily. Homodimer.

It localises to the cytoplasm. It carries out the reaction 3-dehydro-L-gulonate + NAD(+) = 2,3-dioxo-L-gulonate + NADH + H(+). The catalysed reaction is 3-dehydro-L-gulonate + NADP(+) = 2,3-dioxo-L-gulonate + NADPH + H(+). Its function is as follows. Catalyzes the reduction of 2,3-diketo-L-gulonate in the presence of NADH, to form 3-keto-L-gulonate. This is 2,3-diketo-L-gulonate reductase from Escherichia coli (strain SMS-3-5 / SECEC).